We begin with the raw amino-acid sequence, 612 residues long: Alpha-glycerophosphate oxidase (612 aa).

FAD is bound at residue 21–49; that stretch reads DLLIIGGGITGAGVALQAAASGLDTGLIE. A compositionally biased stretch (basic and acidic residues) spans 399 to 408; the sequence is ETSTSEKELD. The interval 399-418 is disordered; it reads ETSTSEKELDPSAVSRGSSF.

It belongs to the FAD-dependent glycerol-3-phosphate dehydrogenase family. FAD serves as cofactor.

It is found in the cytoplasm. It carries out the reaction sn-glycerol 3-phosphate + O2 = dihydroxyacetone phosphate + H2O2. The polypeptide is Alpha-glycerophosphate oxidase (glpO) (Streptococcus pyogenes serotype M1).